A 187-amino-acid chain; its full sequence is Large ribosomal subunit protein uL5 (187 aa).

This sequence belongs to the universal ribosomal protein uL5 family. In terms of assembly, part of the 50S ribosomal subunit; part of the 5S rRNA/L5/L18/L25 subcomplex. Contacts the 5S rRNA and the P site tRNA. Forms a bridge to the 30S subunit in the 70S ribosome.

Functionally, this is one of the proteins that bind and probably mediate the attachment of the 5S RNA into the large ribosomal subunit, where it forms part of the central protuberance. In the 70S ribosome it contacts protein S13 of the 30S subunit (bridge B1b), connecting the 2 subunits; this bridge is implicated in subunit movement. Contacts the P site tRNA; the 5S rRNA and some of its associated proteins might help stabilize positioning of ribosome-bound tRNAs. The polypeptide is Large ribosomal subunit protein uL5 (Mycolicibacterium paratuberculosis (strain ATCC BAA-968 / K-10) (Mycobacterium paratuberculosis)).